Here is a 63-residue protein sequence, read N- to C-terminus: DNA-directed RNA polymerase 7 kDa subunit (63 aa).

It belongs to the poxviridae DNA-directed RNA polymerase 7 kDa subunit family. The DNA-dependent RNA polymerase used for intermediate and late genes expression consists of eight subunits 147 kDa, 133 kDa, 35 kDa, 30 kDa, 22 kDa, 19 kDa, 18 kDa and 7 kDa totalling more than 500 kDa in mass. The same holoenzyme, with the addition of the transcription-specificity factor RAP94, is used for early gene expression.

It is found in the virion. The catalysed reaction is RNA(n) + a ribonucleoside 5'-triphosphate = RNA(n+1) + diphosphate. Its function is as follows. Part of the DNA-dependent RNA polymerase which catalyzes the transcription of viral DNA into RNA using the four ribonucleoside triphosphates as substrates. Responsible for the transcription of early, intermediate and late genes. DNA-dependent RNA polymerase associates with the early transcription factor (ETF) thereby allowing the early genes transcription. Late transcription, and probably also intermediate transcription, require newly synthesized RNA polymerase. This Rabbit fibroma virus (strain Kasza) (RFV) protein is DNA-directed RNA polymerase 7 kDa subunit (RPO7).